The primary structure comprises 156 residues: 3-hydroxyacyl-[acyl-carrier-protein] dehydratase FabZ (156 aa).

H57 is an active-site residue.

The protein belongs to the thioester dehydratase family. FabZ subfamily.

It is found in the cytoplasm. The enzyme catalyses a (3R)-hydroxyacyl-[ACP] = a (2E)-enoyl-[ACP] + H2O. In terms of biological role, involved in unsaturated fatty acids biosynthesis. Catalyzes the dehydration of short chain beta-hydroxyacyl-ACPs and long chain saturated and unsaturated beta-hydroxyacyl-ACPs. The protein is 3-hydroxyacyl-[acyl-carrier-protein] dehydratase FabZ of Anaeromyxobacter sp. (strain K).